Consider the following 202-residue polypeptide: Histone chaperone ASF1B (202 aa).

The tract at residues methionine 1–asparagine 156 is interaction with histone H3 and CHAF1B. The residue at position 198 (serine 198) is a Phosphoserine; by TLK2.

It belongs to the ASF1 family. Interacts with histone H3 (via C-terminus), including histone H3.1, H3.2 and H3.3, and histone H4; the interaction with H3 is direct. Interacts with the CHAF1A, CHAF1B and RBBP4 subunits of the CAF-1 complex. Interacts with HAT1, NASP and TAF1. Found in a soluble complex with NASP and histones H3 and H4; the interaction with NASP is probably indirect and mediated by H3-H4. Interacts with CDAN1. Found in a cytosolic complex with CDAN1, ASF1A, IPO4 and histones H3.1 and H4. Interacts with CREBBP. In terms of processing, phosphorylated by TLK1 and TLK2.

Its subcellular location is the nucleus. The protein resides in the cytoplasm. It is found in the cytosol. Histone chaperone that facilitates histone deposition and histone exchange and removal during nucleosome assembly and disassembly. Cooperates with chromatin assembly factor 1 (CAF-1) to promote replication-dependent chromatin assembly. Also involved in the nuclear import of the histone H3-H4 dimer together with importin-4 (IPO4): specifically recognizes and binds newly synthesized histones with the monomethylation of H3 'Lys-9' (H3K9me1) and diacetylation at 'Lys-5' and 'Lys-12' of H4 (H4K5ac and H4K12ac) marks in the cytosol. Does not participate in replication-independent nucleosome deposition which is mediated by ASF1A and HIRA. Required for gonad development. This is Histone chaperone ASF1B (ASF1B) from Bos taurus (Bovine).